A 380-amino-acid polypeptide reads, in one-letter code: 1-deoxy-D-xylulose 5-phosphate reductoisomerase 2 (380 aa).

The NADPH site is built by Ser-10, Gly-11, Ser-12, Ile-13, Gly-36, Lys-37, Asn-38, and Asn-120. Lys-121 lines the 1-deoxy-D-xylulose 5-phosphate pocket. Glu-122 is an NADPH binding site. Asp-146 is a Mn(2+) binding site. Residues Ser-147, Glu-148, Ser-172, and His-195 each contribute to the 1-deoxy-D-xylulose 5-phosphate site. Glu-148 provides a ligand contact to Mn(2+). Gly-201 lines the NADPH pocket. 4 residues coordinate 1-deoxy-D-xylulose 5-phosphate: Ser-208, Asn-213, Lys-214, and Glu-217. Glu-217 contributes to the Mn(2+) binding site.

This sequence belongs to the DXR family. Requires Mg(2+) as cofactor. Mn(2+) is required as a cofactor.

It carries out the reaction 2-C-methyl-D-erythritol 4-phosphate + NADP(+) = 1-deoxy-D-xylulose 5-phosphate + NADPH + H(+). It participates in isoprenoid biosynthesis; isopentenyl diphosphate biosynthesis via DXP pathway; isopentenyl diphosphate from 1-deoxy-D-xylulose 5-phosphate: step 1/6. Catalyzes the NADPH-dependent rearrangement and reduction of 1-deoxy-D-xylulose-5-phosphate (DXP) to 2-C-methyl-D-erythritol 4-phosphate (MEP). The polypeptide is 1-deoxy-D-xylulose 5-phosphate reductoisomerase 2 (Bacillus thuringiensis subsp. konkukian (strain 97-27)).